The primary structure comprises 676 residues: Ribonuclease R (676 aa).

In terms of domain architecture, RNB spans 207–527 (RKDLRDLLCF…LIVHRLLFNP (321 aa)). The S1 motif domain occupies 566-651 (NKFLQEQPKT…LTQKIVWSIA (86 aa)). The tract at residues 656-676 (DKPKKIKKTPSKKKGTKKRAS) is disordered. The span at 659-676 (KKIKKTPSKKKGTKKRAS) shows a compositional bias: basic residues.

This sequence belongs to the RNR ribonuclease family. RNase R subfamily.

The protein resides in the cytoplasm. It carries out the reaction Exonucleolytic cleavage in the 3'- to 5'-direction to yield nucleoside 5'-phosphates.. Functionally, 3'-5' exoribonuclease that releases 5'-nucleoside monophosphates and is involved in maturation of structured RNAs. This Chlamydia pneumoniae (Chlamydophila pneumoniae) protein is Ribonuclease R.